A 101-amino-acid polypeptide reads, in one-letter code: Small ribosomal subunit protein uS14 (101 aa).

It belongs to the universal ribosomal protein uS14 family. Part of the 30S ribosomal subunit. Contacts proteins S3 and S10.

Functionally, binds 16S rRNA, required for the assembly of 30S particles and may also be responsible for determining the conformation of the 16S rRNA at the A site. The protein is Small ribosomal subunit protein uS14 of Serratia proteamaculans (strain 568).